The sequence spans 218 residues: uncharacterized protein (218 aa).

The next 4 helical transmembrane spans lie at 10 to 30 (IPPLMVYLVVGAVVGIESLGI), 55 to 75 (IGVGGAAVIGAVVGDSIGYSI), 147 to 167 (VTGGICWAGGTTALVYFAGMA), and 175 to 195 (FSWIALVIAVIAGITAAILLR).

It belongs to the DedA family.

Its subcellular location is the cell membrane. This is an uncharacterized protein from Mycobacterium tuberculosis (strain CDC 1551 / Oshkosh).